We begin with the raw amino-acid sequence, 195 residues long: Cysteine/O-acetylserine efflux protein (195 aa).

The Periplasmic portion of the chain corresponds to 1–7; the sequence is MTPTLLS. Residues 8-28 form a helical membrane-spanning segment; sequence AFWTYTLITAMTPGPNNILAL. At 29-46 the chain is on the cytoplasmic side; it reads SSATSHGFRQSTRVLAGM. A helical membrane pass occupies residues 47-67; sequence SLGFLIVMLLCAGISFSLAVI. The Periplasmic segment spans residues 68-69; the sequence is DP. The helical transmembrane segment at 70 to 90 threads the bilayer; sequence AAVHLLSWAGAAYIVWLAWKI. At 91 to 104 the chain is on the cytoplasmic side; it reads ATSPTKEDGLQAKP. A helical transmembrane segment spans residues 105 to 125; that stretch reads ISFWASFALQFVNVKIILYGV. Residues 126-141 lie on the Periplasmic side of the membrane; sequence TALSTFVLPQTQALSW. Residues 142 to 162 traverse the membrane as a helical segment; sequence VVGVSVLLAMIGTFGNVCWAL. Residues 163 to 176 lie on the Cytoplasmic side of the membrane; it reads AGHLFQRLFRQYGR. A helical transmembrane segment spans residues 177–194; the sequence is QLNIVLALLLIYCAVRIF. Tyr195 is a topological domain (periplasmic).

It belongs to the Rht family.

It localises to the cell inner membrane. It carries out the reaction O-acetyl-L-serine(in) = O-acetyl-L-serine(out). The enzyme catalyses L-cysteine(in) = L-cysteine(out). Exporter of O-acetylserine (OAS) and cysteine. This Escherichia coli O139:H28 (strain E24377A / ETEC) protein is Cysteine/O-acetylserine efflux protein (eamB).